Consider the following 380-residue polypeptide: Succinyl-diaminopimelate desuccinylase (380 aa).

Zn(2+) is bound at residue His70. Asp72 is a catalytic residue. Residue Asp103 coordinates Zn(2+). The active-site Proton acceptor is Glu137. Positions 138, 166, and 352 each coordinate Zn(2+).

Belongs to the peptidase M20A family. DapE subfamily. In terms of assembly, homodimer. It depends on Zn(2+) as a cofactor. Co(2+) is required as a cofactor.

It catalyses the reaction N-succinyl-(2S,6S)-2,6-diaminopimelate + H2O = (2S,6S)-2,6-diaminopimelate + succinate. Its pathway is amino-acid biosynthesis; L-lysine biosynthesis via DAP pathway; LL-2,6-diaminopimelate from (S)-tetrahydrodipicolinate (succinylase route): step 3/3. Functionally, catalyzes the hydrolysis of N-succinyl-L,L-diaminopimelic acid (SDAP), forming succinate and LL-2,6-diaminopimelate (DAP), an intermediate involved in the bacterial biosynthesis of lysine and meso-diaminopimelic acid, an essential component of bacterial cell walls. In Azoarcus sp. (strain BH72), this protein is Succinyl-diaminopimelate desuccinylase.